We begin with the raw amino-acid sequence, 101 residues long: NAD(P)H-quinone oxidoreductase subunit 4L, chloroplastic (101 aa).

The next 3 helical transmembrane spans lie at 2–22 (MFEH…YGLI), 32–52 (ICLE…SDLF), and 61–81 (IFAI…LSIL).

The protein belongs to the complex I subunit 4L family. As to quaternary structure, NDH is composed of at least 16 different subunits, 5 of which are encoded in the nucleus.

The protein resides in the plastid. Its subcellular location is the chloroplast thylakoid membrane. The enzyme catalyses a plastoquinone + NADH + (n+1) H(+)(in) = a plastoquinol + NAD(+) + n H(+)(out). It catalyses the reaction a plastoquinone + NADPH + (n+1) H(+)(in) = a plastoquinol + NADP(+) + n H(+)(out). In terms of biological role, NDH shuttles electrons from NAD(P)H:plastoquinone, via FMN and iron-sulfur (Fe-S) centers, to quinones in the photosynthetic chain and possibly in a chloroplast respiratory chain. The immediate electron acceptor for the enzyme in this species is believed to be plastoquinone. Couples the redox reaction to proton translocation, and thus conserves the redox energy in a proton gradient. This chain is NAD(P)H-quinone oxidoreductase subunit 4L, chloroplastic, found in Oryza nivara (Indian wild rice).